Here is a 585-residue protein sequence, read N- to C-terminus: Clathrin heavy chain linker domain-containing protein 1 (585 aa).

Residues Gln118 to Gln239 adopt a coiled-coil conformation.

In Rattus norvegicus (Rat), this protein is Clathrin heavy chain linker domain-containing protein 1 (Clhc1).